The chain runs to 244 residues: Large ribosomal subunit protein uL30 (244 aa).

It belongs to the universal ribosomal protein uL30 family.

This is Large ribosomal subunit protein uL30 (RPL7) from Candida glabrata (strain ATCC 2001 / BCRC 20586 / JCM 3761 / NBRC 0622 / NRRL Y-65 / CBS 138) (Yeast).